A 735-amino-acid polypeptide reads, in one-letter code: Probable ATP-dependent RNA helicase DHR2 (735 aa).

A compositionally biased stretch (polar residues) spans 1–13; sequence MAANSNSRVASNH. The segment at 1-29 is disordered; it reads MAANSNSRVASNHTSKKQKVRRNIHPFTN. Residues 14-24 are compositionally biased toward basic residues; that stretch reads TSKKQKVRRNI. In terms of domain architecture, Helicase ATP-binding spans 91–257; sequence MSYIESNPVT…FNNAPILFVE (167 aa). 104-111 contacts ATP; sequence GETGSGKS. The short motif at 203-206 is the DEAH box element; that stretch reads DEAH. A Helicase C-terminal domain is found at 262–456; it reads DVKQYYLKAP…SPVLMLKRYG (195 aa).

It belongs to the DEAD box helicase family. DEAH subfamily. As to quaternary structure, interacts with NOP19. Interacts with UBP10.

Its subcellular location is the nucleus. It is found in the nucleolus. The catalysed reaction is ATP + H2O = ADP + phosphate + H(+). Functionally, probable ATP-binding RNA helicase. Required for 18S rRNA synthesis. This is Probable ATP-dependent RNA helicase DHR2 (DHR2) from Saccharomyces cerevisiae (strain ATCC 204508 / S288c) (Baker's yeast).